The primary structure comprises 400 residues: Nicotinate phosphoribosyltransferase (400 aa).

At His-220 the chain carries Phosphohistidine; by autocatalysis.

It belongs to the NAPRTase family. In terms of processing, transiently phosphorylated on a His residue during the reaction cycle. Phosphorylation strongly increases the affinity for substrates and increases the rate of nicotinate D-ribonucleotide production. Dephosphorylation regenerates the low-affinity form of the enzyme, leading to product release.

The enzyme catalyses nicotinate + 5-phospho-alpha-D-ribose 1-diphosphate + ATP + H2O = nicotinate beta-D-ribonucleotide + ADP + phosphate + diphosphate. It participates in cofactor biosynthesis; NAD(+) biosynthesis; nicotinate D-ribonucleotide from nicotinate: step 1/1. In terms of biological role, catalyzes the synthesis of beta-nicotinate D-ribonucleotide from nicotinate and 5-phospho-D-ribose 1-phosphate at the expense of ATP. In Cronobacter sakazakii (strain ATCC BAA-894) (Enterobacter sakazakii), this protein is Nicotinate phosphoribosyltransferase.